A 427-amino-acid chain; its full sequence is Enolase (427 aa).

Q163 provides a ligand contact to (2R)-2-phosphoglycerate. Residue E205 is the Proton donor of the active site. Mg(2+)-binding residues include D242, E285, and D312. 4 residues coordinate (2R)-2-phosphoglycerate: K337, R366, S367, and K388. The active-site Proton acceptor is K337.

It belongs to the enolase family. The cofactor is Mg(2+).

It localises to the cytoplasm. The protein resides in the secreted. It is found in the cell surface. The enzyme catalyses (2R)-2-phosphoglycerate = phosphoenolpyruvate + H2O. Its pathway is carbohydrate degradation; glycolysis; pyruvate from D-glyceraldehyde 3-phosphate: step 4/5. Catalyzes the reversible conversion of 2-phosphoglycerate (2-PG) into phosphoenolpyruvate (PEP). It is essential for the degradation of carbohydrates via glycolysis. The chain is Enolase from Bradyrhizobium sp. (strain ORS 278).